The sequence spans 432 residues: Anaerobic glycerol-3-phosphate dehydrogenase subunit B (432 aa).

Belongs to the anaerobic G-3-P dehydrogenase subunit B family. In terms of assembly, composed of a catalytic GlpA/B dimer and of membrane bound GlpC. Requires FMN as cofactor.

The enzyme catalyses a quinone + sn-glycerol 3-phosphate = dihydroxyacetone phosphate + a quinol. The protein operates within polyol metabolism; glycerol degradation via glycerol kinase pathway; glycerone phosphate from sn-glycerol 3-phosphate (anaerobic route): step 1/1. Conversion of glycerol 3-phosphate to dihydroxyacetone. Uses fumarate or nitrate as electron acceptor. This chain is Anaerobic glycerol-3-phosphate dehydrogenase subunit B, found in Haemophilus influenzae (strain PittGG).